A 201-amino-acid polypeptide reads, in one-letter code: Probable calcium-binding protein CML15 (201 aa).

Positions methionine 1–glutamate 55 are disordered. 4 consecutive EF-hand domains span residues alanine 51–alanine 86, valine 87–aspartate 122, alanine 125–alanine 160, and alanine 161–phenylalanine 196. Residues aspartate 64, asparagine 66, aspartate 68, arginine 70, glutamate 75, aspartate 100, aspartate 102, aspartate 104, tyrosine 106, glutamate 111, aspartate 138, aspartate 140, asparagine 142, glutamate 149, aspartate 174, asparagine 176, aspartate 178, and glutamate 185 each contribute to the Ca(2+) site.

In terms of biological role, potential calcium sensor. This chain is Probable calcium-binding protein CML15 (CML15), found in Oryza sativa subsp. japonica (Rice).